The chain runs to 504 residues: Anaerobic nitric oxide reductase transcription regulator NorR (504 aa).

Aspartate 57 carries the 4-aspartylphosphate modification. The 230-residue stretch at 187 to 416 (MIGLSPGMTQ…LEHAIHRAVV (230 aa)) folds into the Sigma-54 factor interaction domain. ATP is bound by residues 215-222 (GETGTGKE) and 278-287 (ADNGTLFLDE). Residues 479–498 (WAASARMLETDVANLHRLAK) constitute a DNA-binding region (H-T-H motif).

It functions in the pathway nitrogen metabolism; nitric oxide reduction. Its function is as follows. Required for the expression of anaerobic nitric oxide (NO) reductase, acts as a transcriptional activator for at least the norVW operon. Activation also requires sigma-54. The protein is Anaerobic nitric oxide reductase transcription regulator NorR of Escherichia coli O7:K1 (strain IAI39 / ExPEC).